The chain runs to 395 residues: Acetate kinase (395 aa).

Asn8 contacts Mg(2+). An ATP-binding site is contributed by Lys15. Residue Arg90 coordinates substrate. Catalysis depends on Asp147, which acts as the Proton donor/acceptor. ATP contacts are provided by residues 207-211 (HLGNG), 284-286 (DMR), and 330-334 (GIGEN). Glu383 lines the Mg(2+) pocket.

It belongs to the acetokinase family. In terms of assembly, homodimer. Requires Mg(2+) as cofactor. The cofactor is Mn(2+).

The protein resides in the cytoplasm. The catalysed reaction is acetate + ATP = acetyl phosphate + ADP. It participates in metabolic intermediate biosynthesis; acetyl-CoA biosynthesis; acetyl-CoA from acetate: step 1/2. Catalyzes the formation of acetyl phosphate from acetate and ATP. Can also catalyze the reverse reaction. The chain is Acetate kinase from Enterococcus faecalis (strain ATCC 700802 / V583).